Here is a 118-residue protein sequence, read N- to C-terminus: Histone H2B.N (118 aa).

Belongs to the histone H2B family. The nucleosome is a histone octamer containing two molecules each of H2A, H2B, H3 and H4 assembled in one H3-H4 heterotetramer and two H2A-H2B heterodimers. The octamer wraps approximately 147 bp of DNA. In terms of tissue distribution, expressed in germline. Predominantly expressed in oocytes.

It localises to the nucleus. Its subcellular location is the chromosome. Functionally, core component of nucleosome. Nucleosomes wrap and compact DNA into chromatin, limiting DNA accessibility to the cellular machineries which require DNA as a template. Histones thereby play a central role in transcription regulation, DNA repair, DNA replication and chromosomal stability. DNA accessibility is regulated via a complex set of post-translational modifications of histones, also called histone code, and nucleosome remodeling. In Homo sapiens (Human), this protein is Histone H2B.N.